Here is a 152-residue protein sequence, read N- to C-terminus: Nucleoside diphosphate kinase (152 aa).

ATP contacts are provided by Lys9, Phe57, Arg85, Thr91, Arg102, and Asn112. The active-site Pros-phosphohistidine intermediate is His115.

The protein belongs to the NDK family. Homotetramer. It depends on Mg(2+) as a cofactor.

The protein resides in the cytoplasm. The enzyme catalyses a 2'-deoxyribonucleoside 5'-diphosphate + ATP = a 2'-deoxyribonucleoside 5'-triphosphate + ADP. It catalyses the reaction a ribonucleoside 5'-diphosphate + ATP = a ribonucleoside 5'-triphosphate + ADP. In terms of biological role, major role in the synthesis of nucleoside triphosphates other than ATP. The ATP gamma phosphate is transferred to the NDP beta phosphate via a ping-pong mechanism, using a phosphorylated active-site intermediate. The sequence is that of Nucleoside diphosphate kinase from Rhodopirellula baltica (strain DSM 10527 / NCIMB 13988 / SH1).